A 352-amino-acid polypeptide reads, in one-letter code: Lipopolysaccharide core biosynthesis mannosyltransferase LpcC (352 aa).

The protein belongs to the glycosyltransferase group 1 family. Glycosyltransferase 4 subfamily.

The protein operates within bacterial outer membrane biogenesis; LPS core biosynthesis. In terms of biological role, acts at transfer of mannose group to a 3-deoxy-D-mono octulonic acid (KDO) via an alpha-1,5 linkage. The sequence is that of Lipopolysaccharide core biosynthesis mannosyltransferase LpcC (lpcC) from Rhizobium leguminosarum bv. viciae.